A 367-amino-acid chain; its full sequence is 2-aminoethylphosphonate--pyruvate transaminase (367 aa).

N6-(pyridoxal phosphate)lysine is present on lysine 193.

It belongs to the class-V pyridoxal-phosphate-dependent aminotransferase family. PhnW subfamily. Homodimer. Pyridoxal 5'-phosphate is required as a cofactor.

It carries out the reaction (2-aminoethyl)phosphonate + pyruvate = phosphonoacetaldehyde + L-alanine. Its function is as follows. Involved in phosphonate degradation. In Vibrio vulnificus (strain YJ016), this protein is 2-aminoethylphosphonate--pyruvate transaminase.